The primary structure comprises 451 residues: MRQAIMSYQNLVSEAGLTQKHLIYGDKELFQHELKTIFARNWLFLTHDSLIPSPGDYVKAKMGVDEVIVSRQNDGSVRAFLNVCRHRGKTIVDAEAGNAKGFVCGYHGWGYGSNGELQSVPFEKELYGDAIKKKCLGLKEVPRIESFHGFIYGCFDAEAPPLIDYLGDVAWYLEPTFKHSGGLELVGPPAKVVVKGNWKVFAENFVGDIYHIGWTHASILRAGQAIFAPLAGNAMLPPEGTGLQATTKYGSGIGVSLDAYSGVQSADLVPEMMAFGGAKQEKLAKEIGDVRARIYRSQVNGTVFPNNCFLTGAGVFKVFNPIDENTTEAWTYAIVEKDMPEDLKRRLADAAQRSTGPAGYWESDDNDNMVLSQNAKKYQSSNSDLIADLGFGKDVYGDECYPGVVSKSAFSETNHRGFYRAYQAHISSSNWAEFENTSRNWHTELTKTTDR.

Residues 42 to 126 (WLFLTHDSLI…LQSVPFEKEL (85 aa)) form the Rieske domain. Residues Cys84, His86, Cys104, and His107 each coordinate [2Fe-2S] cluster. The Fe cation site is built by His211, His216, and Asp365.

The protein belongs to the bacterial ring-hydroxylating dioxygenase alpha subunit family. In terms of assembly, the 2,4-dinitrotoluene dioxygenase (DNTDO) multicomponent enzyme system is composed of an electron transfer component and a dioxygenase component (iron sulfur protein (ISP)). The electron transfer component is composed of a ferredoxin reductase (DntAa) and a ferredoxin (DntAb), and the dioxygenase component is formed of a large alpha subunit (DntAc) and a small beta subunit (DntAd). It depends on [2Fe-2S] cluster as a cofactor. Fe(2+) is required as a cofactor.

It catalyses the reaction 2,4-dinitrotoluene + NADH + O2 = 4-methyl-5-nitrocatechol + nitrite + NAD(+). In terms of biological role, component of the 2,4-dinitrotoluene dioxygenase (DNTDO) multicomponent enzyme system which catalyzes the incorporation of both atoms of molecular oxygen into 2,4-dinitrotoluene (DNT) to form 4-methyl-5-nitrocatechol (MNC) and nitrite. The alpha subunit has a catalytic role in the holoenzyme. Also able to convert naphthalene to cis-(1R,2S)-dihydroxy-1,2-dihydronaphthalene. The protein is 2,4-dinitrotoluene dioxygenase system, large oxygenase component of Burkholderia sp. (strain RASC).